We begin with the raw amino-acid sequence, 189 residues long: dTTP/UTP pyrophosphatase (189 aa).

Asp70 acts as the Proton acceptor in catalysis.

Belongs to the Maf family. YhdE subfamily. Requires a divalent metal cation as cofactor.

It is found in the cytoplasm. It catalyses the reaction dTTP + H2O = dTMP + diphosphate + H(+). The enzyme catalyses UTP + H2O = UMP + diphosphate + H(+). Nucleoside triphosphate pyrophosphatase that hydrolyzes dTTP and UTP. May have a dual role in cell division arrest and in preventing the incorporation of modified nucleotides into cellular nucleic acids. The sequence is that of dTTP/UTP pyrophosphatase from Akkermansia muciniphila (strain ATCC BAA-835 / DSM 22959 / JCM 33894 / BCRC 81048 / CCUG 64013 / CIP 107961 / Muc).